The following is a 225-amino-acid chain: Nucleolar protein 6 (225 aa).

The segment at 1–75 (MGSEEDKKLT…GGKGKNGKKG (75 aa)) is disordered. Positions 9–20 (LTKKQLKAQQFR) are enriched in basic residues. Positions 21-42 (KSKEEKDQEKDVKKEQAPEGKR) are enriched in basic and acidic residues. Ser45 carries the post-translational modification Phosphoserine. Basic residues predominate over residues 56 to 75 (KKKRKTRRGRGGKGKNGKKG). In terms of domain architecture, RRM spans 78–155 (FIVFVGSLPR…KKINVELTVG (78 aa)). Ser160 carries the phosphoserine modification. The segment at 187–225 (NDGNQKKIAKTTATAAQTSGTDNKPVPAGIHPDRAKLLK) is disordered.

The protein belongs to the RRM NOP6 family.

Its subcellular location is the nucleus. The protein localises to the nucleolus. In terms of biological role, predicted to be involved in rRNA processing. In Saccharomyces cerevisiae (strain ATCC 204508 / S288c) (Baker's yeast), this protein is Nucleolar protein 6 (NOP6).